A 922-amino-acid chain; its full sequence is Isoleucine--tRNA ligase (922 aa).

The 'HIGH' region motif lies at 57-67; the sequence is PYANGDIHLGH. Position 553 (glutamate 553) interacts with L-isoleucyl-5'-AMP. The 'KMSKS' region signature appears at 594-598; it reads KMSKS. Lysine 597 is a binding site for ATP. Zn(2+)-binding residues include cysteine 892, cysteine 895, cysteine 912, and cysteine 915.

The protein belongs to the class-I aminoacyl-tRNA synthetase family. IleS type 1 subfamily. Monomer. It depends on Zn(2+) as a cofactor.

It is found in the cytoplasm. It catalyses the reaction tRNA(Ile) + L-isoleucine + ATP = L-isoleucyl-tRNA(Ile) + AMP + diphosphate. Catalyzes the attachment of isoleucine to tRNA(Ile). As IleRS can inadvertently accommodate and process structurally similar amino acids such as valine, to avoid such errors it has two additional distinct tRNA(Ile)-dependent editing activities. One activity is designated as 'pretransfer' editing and involves the hydrolysis of activated Val-AMP. The other activity is designated 'posttransfer' editing and involves deacylation of mischarged Val-tRNA(Ile). The polypeptide is Isoleucine--tRNA ligase (Desulfitobacterium hafniense (strain DSM 10664 / DCB-2)).